Here is a 457-residue protein sequence, read N- to C-terminus: tRNA modification GTPase MnmE (457 aa).

Residues Arg22, Glu83, and Arg122 each coordinate (6S)-5-formyl-5,6,7,8-tetrahydrofolate. One can recognise a TrmE-type G domain in the interval 219–378; it reads GLATAIIGRP…LEEAIKTLFF (160 aa). Asn229 provides a ligand contact to K(+). GTP is bound by residues 229 to 234, 248 to 254, and 273 to 276; these read NVGKSS, TDIAGTT, and DTAG. Ser233 contributes to the Mg(2+) binding site. K(+) is bound by residues Thr248, Ile250, and Thr253. Thr254 serves as a coordination point for Mg(2+). Residue Lys457 coordinates (6S)-5-formyl-5,6,7,8-tetrahydrofolate.

Belongs to the TRAFAC class TrmE-Era-EngA-EngB-Septin-like GTPase superfamily. TrmE GTPase family. Homodimer. Heterotetramer of two MnmE and two MnmG subunits. The cofactor is K(+).

It localises to the cytoplasm. Its function is as follows. Exhibits a very high intrinsic GTPase hydrolysis rate. Involved in the addition of a carboxymethylaminomethyl (cmnm) group at the wobble position (U34) of certain tRNAs, forming tRNA-cmnm(5)s(2)U34. This chain is tRNA modification GTPase MnmE, found in Listeria welshimeri serovar 6b (strain ATCC 35897 / DSM 20650 / CCUG 15529 / CIP 8149 / NCTC 11857 / SLCC 5334 / V8).